A 177-amino-acid polypeptide reads, in one-letter code: Large ribosomal subunit protein uL6 (177 aa).

It belongs to the universal ribosomal protein uL6 family. As to quaternary structure, part of the 50S ribosomal subunit.

This protein binds to the 23S rRNA, and is important in its secondary structure. It is located near the subunit interface in the base of the L7/L12 stalk, and near the tRNA binding site of the peptidyltransferase center. This Rickettsia typhi (strain ATCC VR-144 / Wilmington) protein is Large ribosomal subunit protein uL6.